Here is a 650-residue protein sequence, read N- to C-terminus: Chaperone protein DnaK (650 aa).

At Thr200 the chain carries Phosphothreonine; by autocatalysis. The segment covering 611 to 636 (AQQAGAAGAAGAAAEGASAQGGAQPA) has biased composition (low complexity). The tract at residues 611–650 (AQQAGAAGAAGAAAEGASAQGGAQPADDVVDADFKEVKKD) is disordered.

This sequence belongs to the heat shock protein 70 family.

In terms of biological role, acts as a chaperone. The protein is Chaperone protein DnaK of Burkholderia mallei (strain NCTC 10247).